Consider the following 249-residue polypeptide: Diphthine synthase (249 aa).

S-adenosyl-L-methionine contacts are provided by residues aspartate 83, leucine 86, 111-112, leucine 163, and leucine 205; that span reads SI.

It belongs to the diphthine synthase family. Homodimer.

It catalyses the reaction 2-[(3S)-amino-3-carboxypropyl]-L-histidyl-[translation elongation factor 2] + 3 S-adenosyl-L-methionine = diphthine-[translation elongation factor 2] + 3 S-adenosyl-L-homocysteine + 3 H(+). The protein operates within protein modification; peptidyl-diphthamide biosynthesis. Its function is as follows. S-adenosyl-L-methionine-dependent methyltransferase that catalyzes the trimethylation of the amino group of the modified target histidine residue in translation elongation factor 2 (EF-2), to form an intermediate called diphthine. The three successive methylation reactions represent the second step of diphthamide biosynthesis. In Pyrobaculum islandicum (strain DSM 4184 / JCM 9189 / GEO3), this protein is Diphthine synthase.